Consider the following 250-residue polypeptide: NAD(P)H-quinone oxidoreductase subunit K (250 aa).

The [4Fe-4S] cluster site is built by Cys-63, Cys-64, Cys-128, and Cys-159.

This sequence belongs to the complex I 20 kDa subunit family. In terms of assembly, NDH-1 can be composed of about 15 different subunits; different subcomplexes with different compositions have been identified which probably have different functions. [4Fe-4S] cluster serves as cofactor.

It localises to the cellular thylakoid membrane. The catalysed reaction is a plastoquinone + NADH + (n+1) H(+)(in) = a plastoquinol + NAD(+) + n H(+)(out). It carries out the reaction a plastoquinone + NADPH + (n+1) H(+)(in) = a plastoquinol + NADP(+) + n H(+)(out). NDH-1 shuttles electrons from an unknown electron donor, via FMN and iron-sulfur (Fe-S) centers, to quinones in the respiratory and/or the photosynthetic chain. The immediate electron acceptor for the enzyme in this species is believed to be plastoquinone. Couples the redox reaction to proton translocation, and thus conserves the redox energy in a proton gradient. Cyanobacterial NDH-1 also plays a role in inorganic carbon-concentration. This is NAD(P)H-quinone oxidoreductase subunit K from Rippkaea orientalis (strain PCC 8801 / RF-1) (Cyanothece sp. (strain PCC 8801)).